A 339-amino-acid polypeptide reads, in one-letter code: Ketol-acid reductoisomerase (NADP(+)) (339 aa).

One can recognise a KARI N-terminal Rossmann domain in the interval 1–182 (MRVYYDRDAD…GGGRAGIIET (182 aa)). NADP(+)-binding positions include 24-27 (YGSQ), arginine 48, serine 51, serine 53, and 83-86 (DELQ). Residue histidine 108 is part of the active site. Glycine 134 contacts NADP(+). Residues 183 to 328 (TFREECETDL…ARLRDMMPWI (146 aa)) enclose the KARI C-terminal knotted domain. 4 residues coordinate Mg(2+): aspartate 191, glutamate 195, glutamate 227, and glutamate 231. Position 252 (serine 252) interacts with substrate.

The protein belongs to the ketol-acid reductoisomerase family. Requires Mg(2+) as cofactor.

It carries out the reaction (2R)-2,3-dihydroxy-3-methylbutanoate + NADP(+) = (2S)-2-acetolactate + NADPH + H(+). The catalysed reaction is (2R,3R)-2,3-dihydroxy-3-methylpentanoate + NADP(+) = (S)-2-ethyl-2-hydroxy-3-oxobutanoate + NADPH + H(+). It participates in amino-acid biosynthesis; L-isoleucine biosynthesis; L-isoleucine from 2-oxobutanoate: step 2/4. It functions in the pathway amino-acid biosynthesis; L-valine biosynthesis; L-valine from pyruvate: step 2/4. In terms of biological role, involved in the biosynthesis of branched-chain amino acids (BCAA). Catalyzes an alkyl-migration followed by a ketol-acid reduction of (S)-2-acetolactate (S2AL) to yield (R)-2,3-dihydroxy-isovalerate. In the isomerase reaction, S2AL is rearranged via a Mg-dependent methyl migration to produce 3-hydroxy-3-methyl-2-ketobutyrate (HMKB). In the reductase reaction, this 2-ketoacid undergoes a metal-dependent reduction by NADPH to yield (R)-2,3-dihydroxy-isovalerate. This Nitrobacter winogradskyi (strain ATCC 25391 / DSM 10237 / CIP 104748 / NCIMB 11846 / Nb-255) protein is Ketol-acid reductoisomerase (NADP(+)).